The sequence spans 521 residues: Bifunctional purine biosynthesis protein PurH (521 aa).

The 145-residue stretch at Met-1 to Val-145 folds into the MGS-like domain.

Belongs to the PurH family.

The catalysed reaction is (6R)-10-formyltetrahydrofolate + 5-amino-1-(5-phospho-beta-D-ribosyl)imidazole-4-carboxamide = 5-formamido-1-(5-phospho-D-ribosyl)imidazole-4-carboxamide + (6S)-5,6,7,8-tetrahydrofolate. It catalyses the reaction IMP + H2O = 5-formamido-1-(5-phospho-D-ribosyl)imidazole-4-carboxamide. It participates in purine metabolism; IMP biosynthesis via de novo pathway; 5-formamido-1-(5-phospho-D-ribosyl)imidazole-4-carboxamide from 5-amino-1-(5-phospho-D-ribosyl)imidazole-4-carboxamide (10-formyl THF route): step 1/1. It functions in the pathway purine metabolism; IMP biosynthesis via de novo pathway; IMP from 5-formamido-1-(5-phospho-D-ribosyl)imidazole-4-carboxamide: step 1/1. The sequence is that of Bifunctional purine biosynthesis protein PurH from Paraburkholderia phymatum (strain DSM 17167 / CIP 108236 / LMG 21445 / STM815) (Burkholderia phymatum).